The primary structure comprises 324 residues: Transcription factor MYB74 (324 aa).

2 consecutive HTH myb-type domains span residues 10 to 62 (KNGL…TNYL) and 63 to 117 (RPDI…RKRL). DNA-binding regions (H-T-H motif) lie at residues 38 to 62 (WRTLPKNAGLQRCGKSCRLRWTNYL) and 90 to 113 (WSAIAARLPGRTDNEIKNYWNTHI).

Highly expressed in flowers and at lower levels in rosette leaves and cauline leaves. Expressed at low levels in roots, stems and siliques.

Its subcellular location is the nucleus. Its function is as follows. Probable transcription factor that may function in salt stress response. The protein is Transcription factor MYB74 of Arabidopsis thaliana (Mouse-ear cress).